A 156-amino-acid polypeptide reads, in one-letter code: SsrA-binding protein (156 aa).

The disordered stretch occupies residues 130–156; that stretch reads KFDKRDDLKKKDAKRDIDRALRDKQKY. Positions 132–156 are enriched in basic and acidic residues; sequence DKRDDLKKKDAKRDIDRALRDKQKY.

The protein belongs to the SmpB family.

The protein resides in the cytoplasm. Functionally, required for rescue of stalled ribosomes mediated by trans-translation. Binds to transfer-messenger RNA (tmRNA), required for stable association of tmRNA with ribosomes. tmRNA and SmpB together mimic tRNA shape, replacing the anticodon stem-loop with SmpB. tmRNA is encoded by the ssrA gene; the 2 termini fold to resemble tRNA(Ala) and it encodes a 'tag peptide', a short internal open reading frame. During trans-translation Ala-aminoacylated tmRNA acts like a tRNA, entering the A-site of stalled ribosomes, displacing the stalled mRNA. The ribosome then switches to translate the ORF on the tmRNA; the nascent peptide is terminated with the 'tag peptide' encoded by the tmRNA and targeted for degradation. The ribosome is freed to recommence translation, which seems to be the essential function of trans-translation. This is SsrA-binding protein from Exiguobacterium sibiricum (strain DSM 17290 / CCUG 55495 / CIP 109462 / JCM 13490 / 255-15).